A 1047-amino-acid chain; its full sequence is FACT complex subunit SPT16 (1047 aa).

Ala2 carries the post-translational modification N-acetylalanine. Position 139 is an N6-acetyllysine (Lys139). Ser188 bears the Phosphoserine mark. An N6-acetyllysine mark is found at Lys196 and Lys223. Ser455 carries the phosphoserine modification. The stretch at 465–507 forms a coiled coil; it reads RNEMTAEEKRRAHQKELAAQLNEEAKRRLTEQKGEQQIQKARK. A disordered region spans residues 491–518; that stretch reads RRLTEQKGEQQIQKARKSNVSYKNPSLM. Lys497 participates in a covalent cross-link: Glycyl lysine isopeptide (Lys-Gly) (interchain with G-Cter in SUMO2). Over residues 499–514 the composition is skewed to polar residues; it reads EQQIQKARKSNVSYKN. Ser508 is modified (phosphoserine). N6-acetyllysine; alternate is present on Lys513. Lys513 is covalently cross-linked (Glycyl lysine isopeptide (Lys-Gly) (interchain with G-Cter in SUMO2); alternate). A Glycyl lysine isopeptide (Lys-Gly) (interchain with G-Cter in SUMO2) cross-link involves residue Lys647. Phosphoserine is present on residues Ser650 and Ser658. Residues Lys732 and Lys786 each carry the N6-acetyllysine modification. Residue Thr903 is modified to Phosphothreonine. At Lys904 the chain carries N6-acetyllysine. Residues 918-1047 are disordered; sequence EQGGWSFLEP…SSAPPKKKRK (130 aa). Over residues 927 to 973 the composition is skewed to acidic residues; the sequence is PEGEGSDAEDGDSESEIEDETFNPSEDDYEEEEEDSDEDYSSEAEES. Residues Ser979, Ser982, Ser986, and Ser1015 each carry the phosphoserine modification. Positions 985–1005 are enriched in basic and acidic residues; the sequence is ESGKDWDELEEEARKADRESR. Residues 1024-1039 show a composition bias toward low complexity; that stretch reads VHSSGRGSNRGSRHSS.

Belongs to the peptidase M24 family. SPT16 subfamily. Interacts with MYOG (via C-terminal region). Component of the FACT complex, a stable heterodimer of SSRP1 and SUPT16H. Also a component of a CK2-SPT16-SSRP1 complex which forms following UV irradiation, composed of SSRP1, SUPT16H, CSNK2A1, CSNK2A2 and CSNK2B. Interacts with NEK9. Binds to histone H2A-H2B. Identified in a centromere complex containing histones H2A, H2B and H4, and at least CENPA, CENPB, CENPC, CENPT, CENPN, HJURP, SUPT16H, SSRP1 and RSF1. Interacts with GTF2E2. ADP-ribosylated. ADP-ribosylation by PARP1 is induced by genotoxic stress and correlates with dissociation of FACT from chromatin. Widely expressed. Expressed in brain, liver, heart, kidneys, lungs, spleen, thymus, ovary, and testes, with highest levels of expression observed in thymus.

It localises to the nucleus. Its subcellular location is the chromosome. Functionally, component of the FACT complex, a general chromatin factor that acts to reorganize nucleosomes. The FACT complex is involved in multiple processes that require DNA as a template such as mRNA elongation, DNA replication and DNA repair. During transcription elongation the FACT complex acts as a histone chaperone that both destabilizes and restores nucleosomal structure. It facilitates the passage of RNA polymerase II and transcription by promoting the dissociation of one histone H2A-H2B dimer from the nucleosome, then subsequently promotes the reestablishment of the nucleosome following the passage of RNA polymerase II. The FACT complex is probably also involved in phosphorylation of 'Ser-392' of p53/TP53 via its association with CK2 (casein kinase II). The sequence is that of FACT complex subunit SPT16 (Supt16h) from Mus musculus (Mouse).